Here is a 610-residue protein sequence, read N- to C-terminus: Glutamine--fructose-6-phosphate aminotransferase [isomerizing] (610 aa).

The active-site Nucleophile; for GATase activity is the Cys-2. The 217-residue stretch at Cys-2–His-218 folds into the Glutamine amidotransferase type-2 domain. SIS domains are found at residues Ala-286–Arg-426 and Leu-459–Pro-600. Lys-605 (for Fru-6P isomerization activity) is an active-site residue.

Homodimer.

The protein resides in the cytoplasm. It carries out the reaction D-fructose 6-phosphate + L-glutamine = D-glucosamine 6-phosphate + L-glutamate. Its function is as follows. Catalyzes the first step in hexosamine metabolism, converting fructose-6P into glucosamine-6P using glutamine as a nitrogen source. The protein is Glutamine--fructose-6-phosphate aminotransferase [isomerizing] of Haemophilus ducreyi (strain 35000HP / ATCC 700724).